Reading from the N-terminus, the 384-residue chain is tRNA-specific 2-thiouridylase MnmA (384 aa).

The segment at 1-26 (MDEGIRASGGIRACQTGKQKQGRKRP) is disordered. ATP is bound by residues 36-43 (GMSGGVDS) and Met62. The interaction with target base in tRNA stretch occupies residues 122 to 124 (NPD). Catalysis depends on Cys127, which acts as the Nucleophile. A disulfide bridge links Cys127 with Cys223. Residue Gly151 participates in ATP binding. Residues 173–175 (KDQ) form an interaction with tRNA region. The active-site Cysteine persulfide intermediate is Cys223. Positions 334–335 (RY) are interaction with tRNA.

The protein belongs to the MnmA/TRMU family.

The protein localises to the cytoplasm. The enzyme catalyses S-sulfanyl-L-cysteinyl-[protein] + uridine(34) in tRNA + AH2 + ATP = 2-thiouridine(34) in tRNA + L-cysteinyl-[protein] + A + AMP + diphosphate + H(+). Catalyzes the 2-thiolation of uridine at the wobble position (U34) of tRNA, leading to the formation of s(2)U34. This is tRNA-specific 2-thiouridylase MnmA from Chromobacterium violaceum (strain ATCC 12472 / DSM 30191 / JCM 1249 / CCUG 213 / NBRC 12614 / NCIMB 9131 / NCTC 9757 / MK).